The chain runs to 314 residues: Olfactory receptor 5B17 (314 aa).

Over 1–23 (MENNTEVSEFILLGLTNAPELQV) the chain is Extracellular. Asn3 is a glycosylation site (N-linked (GlcNAc...) asparagine). A helical membrane pass occupies residues 24-44 (PLFIMFTLIYLITLTGNLGMI). Over 45–52 (ILILLDSH) the chain is Cytoplasmic. The helical transmembrane segment at 53 to 73 (LHTPMYFFLSNLSLAGIGYSS) threads the bilayer. The Extracellular segment spans residues 74–97 (AVTPKVLTGLLIEDKAISYSACAA). Cys95 and Cys187 are disulfide-bonded. The helical transmembrane segment at 98–118 (QMFFCAVFATVENYLLSSMAY) threads the bilayer. Residues 119 to 137 (DRYAAVCNPLHYTTTMTTR) are Cytoplasmic-facing. A helical membrane pass occupies residues 138–158 (VCACLAIGCYVIGFLNASIQI). Over 159 to 194 (GDTFRLSFCMSNVIHHFFCDKPAVITLTCSEKHISE) the chain is Extracellular. Residues 195-215 (LILVLISSFNVFFALLVTLIS) form a helical membrane-spanning segment. Residues 216-235 (YLFILITILKRHTGKGYQKP) lie on the Cytoplasmic side of the membrane. A helical membrane pass occupies residues 236–256 (LSTCGSHLIAIFLFYITVIIM). The Extracellular segment spans residues 257–269 (YIRPSSSHSMDTD). Residues 270–290 (KIASVFYTMIIPMLSPIVYTL) traverse the membrane as a helical segment. Over 291–314 (RNKDVKNAFMKVVEKAKYSLDSVF) the chain is Cytoplasmic.

The protein belongs to the G-protein coupled receptor 1 family.

It is found in the cell membrane. Odorant receptor. This Homo sapiens (Human) protein is Olfactory receptor 5B17 (OR5B17).